The sequence spans 232 residues: MPALLPSLTEINAQLADQAATQIIQWAATEFGSGLVLSTSFGIQSAVMLHLATQVQPDIPVIWIDTGYLPTETYRFAAELTERLKLNLKVYQSEISPARMEALYGRLWESESVEDFNRYDQMRKVEPMNRALQELGATAWLSGVRRQQTAHRQSMEIVELKRDRYAIRPILGWHSRDVYQYLTAHDLPYHPLFDQGYVTVGDWHSSRPLQADDSDERSTRFRGLKQECGLHL.

The active-site Nucleophile; cysteine thiosulfonate intermediate is the C228.

It belongs to the PAPS reductase family. CysH subfamily.

It localises to the cytoplasm. The catalysed reaction is [thioredoxin]-disulfide + sulfite + adenosine 3',5'-bisphosphate + 2 H(+) = [thioredoxin]-dithiol + 3'-phosphoadenylyl sulfate. It participates in sulfur metabolism; hydrogen sulfide biosynthesis; sulfite from sulfate: step 3/3. Its function is as follows. Catalyzes the formation of sulfite from phosphoadenosine 5'-phosphosulfate (PAPS) using thioredoxin as an electron donor. The chain is Phosphoadenosine 5'-phosphosulfate reductase from Synechococcus sp. (strain ATCC 27144 / PCC 6301 / SAUG 1402/1) (Anacystis nidulans).